A 636-amino-acid chain; its full sequence is Threonine--tRNA ligase (636 aa).

Residues 1-61 (MINITLPDDS…RNDCAVRLIT (61 aa)) enclose the TGS domain. A catalytic region spans residues 238-528 (DHRKIGTRMG…LVEHFAGKFP (291 aa)). Cys-329, His-380, and His-505 together coordinate Zn(2+).

This sequence belongs to the class-II aminoacyl-tRNA synthetase family. Homodimer. It depends on Zn(2+) as a cofactor.

Its subcellular location is the cytoplasm. It carries out the reaction tRNA(Thr) + L-threonine + ATP = L-threonyl-tRNA(Thr) + AMP + diphosphate + H(+). In terms of biological role, catalyzes the attachment of threonine to tRNA(Thr) in a two-step reaction: L-threonine is first activated by ATP to form Thr-AMP and then transferred to the acceptor end of tRNA(Thr). Also edits incorrectly charged L-seryl-tRNA(Thr). This Desulforapulum autotrophicum (strain ATCC 43914 / DSM 3382 / VKM B-1955 / HRM2) (Desulfobacterium autotrophicum) protein is Threonine--tRNA ligase.